The chain runs to 161 residues: Ribonuclease P protein component 2 (161 aa).

It belongs to the eukaryotic/archaeal RNase P protein component 2 family. In terms of assembly, consists of a catalytic RNA component and at least 4-5 protein subunits.

The protein localises to the cytoplasm. The catalysed reaction is Endonucleolytic cleavage of RNA, removing 5'-extranucleotides from tRNA precursor.. Its function is as follows. Part of ribonuclease P, a protein complex that generates mature tRNA molecules by cleaving their 5'-ends. The chain is Ribonuclease P protein component 2 from Haloarcula marismortui (strain ATCC 43049 / DSM 3752 / JCM 8966 / VKM B-1809) (Halobacterium marismortui).